The primary structure comprises 75 residues: Defensin-like protein (75 aa).

The signal sequence occupies residues 1-24; it reads MEKKSIAGLCFLFLVLFVAQEVVV. 4 disulfides stabilise this stretch: C31-C75, C42-C63, C48-C69, and C52-C71.

It belongs to the DEFL family.

The protein resides in the secreted. This protein is required for germination. In Vigna unguiculata (Cowpea), this protein is Defensin-like protein.